Here is a 246-residue protein sequence, read N- to C-terminus: Peroxisomal membrane protein 11A (246 aa).

At 1 to 93 (MDAFIRVANQ…LCLTLANLNR (93 aa)) the chain is on the cytoplasmic side. Residues 94 to 114 (VVYYICDTVLWAKSVGLTSGV) traverse the membrane as a helical segment. Topologically, residues 115–217 (NREKWQRWAA…LNQLGIYKSN (103 aa)) are lumenal. The chain crosses the membrane as a helical span at residues 218–238 (LGVVGLGGLISSLAGLLTVVY). A required for homodimerization, interaction with PEX11G, and peroxisomal localization region spans residues 218–238 (LGVVGLGGLISSLAGLLTVVY). Residues 239–246 (PQLKLKAR) are Cytoplasmic-facing.

The protein belongs to the peroxin-11 family. Homodimer. Heterodimer with PEX11G. Probably interacts with COPB2 and COPA. Interacts with PEX19. Interacts with FIS1. In terms of tissue distribution, strongly expressed in liver and at lower levels in heart, brain, kidney and testis.

The protein localises to the peroxisome membrane. In terms of biological role, may be involved in peroxisomal proliferation and may regulate peroxisomes division. May mediate binding of coatomer proteins to the peroxisomal membrane. Promotes membrane protrusion and elongation on the peroxisomal surface. This chain is Peroxisomal membrane protein 11A (Pex11a), found in Mus musculus (Mouse).